Reading from the N-terminus, the 2213-residue chain is Protein sidekick-1 (2213 aa).

The disordered stretch occupies residues 1–73 (MARGARPSAA…GAGRCGGRRA (73 aa)). Positions 23-38 (AGPGRPRGSPPGRARP) are enriched in low complexity. 5 Ig-like C2-type domains span residues 104–186 (PYFK…SEVQ), 191–277 (GSFM…SPFI), 293–378 (PTIV…RATA), 386–476 (PYFT…LDVT), and 480–569 (PVFT…ATLT). A disulfide bond links Cys126 and Cys169. Residues Asn271 and Asn301 are each glycosylated (N-linked (GlcNAc...) asparagine). 3 cysteine pairs are disulfide-bonded: Cys315/Cys362, Cys408/Cys458, and Cys501/Cys553. Residues Asn550, Asn563, and Asn572 are each glycosylated (N-linked (GlcNAc...) asparagine). One can recognise an Ig-like C2-type 6 domain in the interval 574–663 (TSIVHPPEDH…GNDSRMARLE (90 aa)). A disulfide bridge connects residues Cys595 and Cys647. N-linked (GlcNAc...) asparagine glycans are attached at residues Asn655, Asn679, Asn782, Asn821, Asn882, Asn1015, and Asn1024. Fibronectin type-III domains follow at residues 670–766 (SPQN…LPEE), 771–867 (PPKN…TLQG), 872–970 (PPQN…TQED), 974–1068 (AVGH…VPPD), 1072–1171 (APSN…TLQA), 1176–1274 (APTS…TRES), 1279–1376 (APEN…TKDD), 1380–1474 (PPVR…TEKR), 1479–1576 (PPRE…TLQD), 1581–1699 (PPGS…VGEA), 1704–1800 (APQN…THQA), 1804–1899 (APSF…AGPA), and 1902–2000 (SPGS…SAQV). N-linked (GlcNAc...) asparagine glycosylation is found at Asn1282 and Asn1333. N-linked (GlcNAc...) asparagine glycans are attached at residues Asn1654, Asn1748, Asn1767, Asn1819, and Asn1893. Residues 2010–2030 (FLLVMALSSLIVILLVVFALV) form a helical membrane-spanning segment. At 2031–2213 (LHGQNKKYKN…TPLTGFSSFV (183 aa)) the chain is on the cytoplasmic side. Positions 2075-2098 (STFSKKNGTRSPPRPSPGGLHYSD) are disordered. The PDZ-binding motif lies at 2207-2213 (TGFSSFV).

This sequence belongs to the sidekick family. In terms of assembly, homodimer; mediates homophilic interactions to promote cell adhesion. As to expression, up-regulated in glomeruli in HIV-associated nephropathy. In diseased glomeruli, significantly overexpressed and the expression is no longer restricted to mesangial cells but includes podocytes and parietal epithelial cells.

Its subcellular location is the cell membrane. The protein localises to the synapse. Its function is as follows. Adhesion molecule that promotes lamina-specific synaptic connections in the retina. Expressed in specific subsets of interneurons and retinal ganglion cells (RGCs) and promotes synaptic connectivity via homophilic interactions. In Homo sapiens (Human), this protein is Protein sidekick-1.